The sequence spans 142 residues: Hemoglobin subunit alpha-A (142 aa).

Residues 2 to 142 enclose the Globin domain; it reads VLSANDKTNV…VGNVLTAKYR (141 aa). O2 is bound at residue His-59. Heme b is bound at residue His-88.

Belongs to the globin family. As to quaternary structure, heterotetramer of two alpha chains and two beta chains. In terms of tissue distribution, red blood cells.

Its function is as follows. Involved in oxygen transport from the lung to the various peripheral tissues. The protein is Hemoglobin subunit alpha-A (HBAA) of Aegypius monachus (Cinereous vulture).